Reading from the N-terminus, the 320-residue chain is Cytochrome f (320 aa).

The first 35 residues, Met1–Ala35, serve as a signal peptide directing secretion. Tyr36, Cys56, Cys59, and His60 together coordinate heme. A helical transmembrane segment spans residues Val286–Lys306.

It belongs to the cytochrome f family. The 4 large subunits of the cytochrome b6-f complex are cytochrome b6, subunit IV (17 kDa polypeptide, petD), cytochrome f and the Rieske protein, while the 4 small subunits are PetG, PetL, PetM and PetN. The complex functions as a dimer. Requires heme as cofactor.

Its subcellular location is the plastid. The protein resides in the chloroplast thylakoid membrane. Functionally, component of the cytochrome b6-f complex, which mediates electron transfer between photosystem II (PSII) and photosystem I (PSI), cyclic electron flow around PSI, and state transitions. The sequence is that of Cytochrome f from Cycas taitungensis (Prince sago).